The primary structure comprises 147 residues: Cell division protein SepF 1 (147 aa).

The protein belongs to the SepF family. Homodimer. Interacts with FtsZ.

The protein localises to the cytoplasm. Functionally, cell division protein that is part of the divisome complex and is recruited early to the Z-ring. Probably stimulates Z-ring formation, perhaps through the cross-linking of FtsZ protofilaments. Its function overlaps with FtsA. The polypeptide is Cell division protein SepF 1 (Desulforamulus reducens (strain ATCC BAA-1160 / DSM 100696 / MI-1) (Desulfotomaculum reducens)).